Reading from the N-terminus, the 1020-residue chain is MEDGHSKTVEQSLNFFGTDPERGLTLDQIKANQKKYGPNELPTEEGKSIWQLVLEQFDDLLVKILLLAAIISFVLALFEEHEETFTAFVEPLVILLILIANAVVGVWQERNAESAIEALKEYEPEMGKVVRQDKSGIQKVRAKEIVPGDLVEVSVGDKIPADIRITHIYSTTLRIDQSILTGESVSVIKHTDAIPDPRAVNQDKKNILFSGTNVAAGKARGVVIGTGLSTAIGKIRTEMSETEEIKTPLQQKLDEFGEQLSKVISVICVAVWAINIGHFNDPAHGGSWIKGAIYYFKIAVALAVAAIPEGLPAVITTCLALGTRRMAKKNAIVRSLPSVETLGCTSVICSDKTGTLTTNQMSVSRMFIFDKVEGNDSSFLEFEMTGSTYEPIGEVFLNGQRIKAADYDTLQELSTICIMCNDSAIDYNEFKQAFEKVGEATETALIVLAEKLNSFSVNKSGLDRRSAAIACRGEIETKWKKEFTLEFSRDRKSMSSYCTPLKASRLGTGPKLFVKGAPEGVLERCTHARVGTTKVPLTSALKAKILALTGQYGTGRDTLRCLALAVADSPMKPDEMDLGDSTKFYQYEVNLTFVGVVGMLDPPRKEVFDSIVRCRAAGIRVIVITGDNKATAEAICRRIGVFAEDEDTTGKSYSGREFDDLSPTEQKAAVARSRLFSRVEPQHKSKIVEFLQSMNEISAMTGDGVNDAPALKKAEIGIAMGSGTAVAKSAAEMVLADDNFSSIVSAVEEGRAIYNNMKQFIRYLISSNIGEVVSIFLTAALGLPEALIPVQLLWVNLVTDGLPATALGFNPPDLDIMEKPPRKADEGLISGWLFFRYMAIGFYVGAATVGAAAWWFVFSDEGPKLSYWQLTHHLSCLGGGDEFKGVDCKIFSDPHAMTMALSVLVTIEMLNAMNSLSENQSLITMPPWCNLWLIGSMALSFTLHFVILYVDVLSTVFQVTPLSAEEWITVMKFSIPVVLLDETLKFVARKIADGESPIYKMHGIVLMWAVFFGLLYAMML.

Residues 1-48 (MEDGHSKTVEQSLNFFGTDPERGLTLDQIKANQKKYGPNELPTEEGKS) lie on the Cytoplasmic side of the membrane. The chain crosses the membrane as a helical span at residues 49–69 (IWQLVLEQFDDLLVKILLLAA). Residues 70 to 89 (IISFVLALFEEHEETFTAFV) lie on the Lumenal side of the membrane. The chain crosses the membrane as a helical span at residues 90–110 (EPLVILLILIANAVVGVWQER). Residues 111–253 (NAESAIEALK…EIKTPLQQKL (143 aa)) are Cytoplasmic-facing. Phosphoserine is present on Ser240. A helical transmembrane segment spans residues 254 to 273 (DEFGEQLSKVISVICVAVWA). The Lumenal segment spans residues 274–295 (INIGHFNDPAHGGSWIKGAIYY). A helical transmembrane segment spans residues 296 to 313 (FKIAVALAVAAIPEGLPA). Ca(2+) is bound by residues Val304, Ala305, Ile307, and Glu309. Residues 314 to 757 (VITTCLALGT…EEGRAIYNNM (444 aa)) lie on the Cytoplasmic side of the membrane. Residue Asp351 is the 4-aspartylphosphate intermediate of the active site. Mg(2+) contacts are provided by Asp703 and Asp707. Residues 758–777 (KQFIRYLISSNIGEVVSIFL) traverse the membrane as a helical segment. Ca(2+) contacts are provided by Asn768 and Glu771. The Lumenal segment spans residues 778–787 (TAALGLPEAL). A helical membrane pass occupies residues 788-808 (IPVQLLWVNLVTDGLPATALG). Residues Asn796, Thr799, and Asp800 each coordinate Ca(2+). The Cytoplasmic segment spans residues 809–828 (FNPPDLDIMEKPPRKADEGL). A helical transmembrane segment spans residues 829 to 851 (ISGWLFFRYMAIGFYVGAATVGA). Over 852–897 (AAWWFVFSDEGPKLSYWQLTHHLSCLGGGDEFKGVDCKIFSDPHAM) the chain is Lumenal. Residues 898 to 917 (TMALSVLVTIEMLNAMNSLS) form a helical membrane-spanning segment. Glu908 lines the Ca(2+) pocket. Topologically, residues 918 to 930 (ENQSLITMPPWCN) are cytoplasmic. A helical transmembrane segment spans residues 931-949 (LWLIGSMALSFTLHFVILY). Residues 950–964 (VDVLSTVFQVTPLSA) are Lumenal-facing. Residues 965–985 (EEWITVMKFSIPVVLLDETLK) form a helical membrane-spanning segment. The Cytoplasmic portion of the chain corresponds to 986 to 1020 (FVARKIADGESPIYKMHGIVLMWAVFFGLLYAMML).

Belongs to the cation transport ATPase (P-type) (TC 3.A.3) family. Interacts with SclA and SclB.

It is found in the endoplasmic reticulum membrane. The protein localises to the sarcoplasmic reticulum membrane. It carries out the reaction Ca(2+)(in) + ATP + H2O = Ca(2+)(out) + ADP + phosphate + H(+). In terms of biological role, this magnesium-dependent enzyme catalyzes the hydrolysis of ATP coupled with the transport of calcium. This Drosophila melanogaster (Fruit fly) protein is Calcium-transporting ATPase sarcoplasmic/endoplasmic reticulum type.